A 154-amino-acid chain; its full sequence is Pro-corazonin (154 aa).

The N-terminal stretch at 1 to 19 (MLRLLLLPLFLFTLSMCMG) is a signal peptide. Q20 carries the pyrrolidone carboxylic acid modification. At N30 the chain carries Asparagine amide. Positions 70–154 (LERCLSQLQR…SAEPNVFGKH (85 aa)) are excised as a propeptide. Positions 91-119 (DFNANRVDPDPENSAHPRLSNSNGENVLY) are disordered. Polar residues predominate over residues 109-119 (LSNSNGENVLY).

It belongs to the corazonin family. In terms of tissue distribution, from late embryo to larva, expression is consistently detected in three neuronal groups: dorso-lateral neurons (DL), dorso-medial neurons (DM), and neurons in the ventral nerve cord (vCrz). Both the vCrz and DM groups die via programmed cell death during metamorphosis, whereas the DL neurons persist to adulthood. In adults, expression is seen in a cluster of six to eight neurons per lobe in the pars lateralis (DLP), in numerous neuronal cells in the optic lobes, and in a novel group of four abdominal ganglionic neurons present only in males (ms-aCrz). Projections of the ms-aCrz neurons terminate within the ventral nerve cord, implying a role as interneurons. Terminals of the DLP neurons are found in the retrocerebral complex that produces juvenile hormone and adipokinetic hormone, located in the vicinity of terminals emanating from PDF-containing pacemaking neurons.

The protein localises to the secreted. Cardioactive peptide. Corazonin is probably involved in the physiological regulation of the heart beat. Clock (Clk) and cycle (cyc) proteins negatively regulate Crz transcription in a cell-specific manner. This Drosophila melanogaster (Fruit fly) protein is Pro-corazonin (Crz).